The following is a 117-amino-acid chain: MDLIKVVEQRFADLTQKAYPHFKSGDTITVAYRIKEGNKERIQQYRGVVIKMAGHGSSKRFTVRKMSENIGVERIFPINSPFIDNIVLNKIGKVRRSKLYYLRKLIGKKSRIKEKRI.

This sequence belongs to the bacterial ribosomal protein bL19 family.

Functionally, this protein is located at the 30S-50S ribosomal subunit interface and may play a role in the structure and function of the aminoacyl-tRNA binding site. In Azobacteroides pseudotrichonymphae genomovar. CFP2, this protein is Large ribosomal subunit protein bL19.